Here is a 208-residue protein sequence, read N- to C-terminus: NAD(P)H dehydrogenase (quinone) (208 aa).

The Flavodoxin-like domain occupies 4–192; it reads VLVLYYSSYG…DGARFQGRHV (189 aa). FMN contacts are provided by residues 10–15 and 78–80; these read SSYGHV and TRF. Y12 lines the NAD(+) pocket. A substrate-binding site is contributed by W98. Residues 113 to 119 and H134 each bind FMN; that span reads STGSQHG. Positions 161-183 are disordered; that stretch reads YGASTLADDGDGGDRQPSANELD.

Belongs to the WrbA family. It depends on FMN as a cofactor.

The enzyme catalyses a quinone + NADH + H(+) = a quinol + NAD(+). It carries out the reaction a quinone + NADPH + H(+) = a quinol + NADP(+). The polypeptide is NAD(P)H dehydrogenase (quinone) (Paracoccus denitrificans (strain Pd 1222)).